The primary structure comprises 32 residues: Calcitonin (32 aa).

Residues Cys-1 and Cys-7 are joined by a disulfide bond. Residue Pro-32 is modified to Proline amide.

Belongs to the calcitonin family.

The protein resides in the secreted. Its function is as follows. Causes a rapid but short-lived drop in the level of calcium and phosphate in blood by promoting the incorporation of those ions in the bones. The chain is Calcitonin from Aquarana catesbeiana (American bullfrog).